The chain runs to 189 residues: HGPRTase-like protein (189 aa).

The protein belongs to the purine/pyrimidine phosphoribosyltransferase family. Archaeal HPRT subfamily.

Its function is as follows. May catalyze a purine salvage reaction, the substrate is unknown. This chain is HGPRTase-like protein, found in Natronomonas pharaonis (strain ATCC 35678 / DSM 2160 / CIP 103997 / JCM 8858 / NBRC 14720 / NCIMB 2260 / Gabara) (Halobacterium pharaonis).